We begin with the raw amino-acid sequence, 241 residues long: Carboxy-S-adenosyl-L-methionine synthase 1 (241 aa).

Residues Y37, 61–63 (GCS), N131, and R198 contribute to the S-adenosyl-L-methionine site.

Belongs to the class I-like SAM-binding methyltransferase superfamily. Cx-SAM synthase family. As to quaternary structure, homodimer.

It carries out the reaction prephenate + S-adenosyl-L-methionine = carboxy-S-adenosyl-L-methionine + 3-phenylpyruvate + H2O. Catalyzes the conversion of S-adenosyl-L-methionine (SAM) to carboxy-S-adenosyl-L-methionine (Cx-SAM). This Yersinia pseudotuberculosis serotype IB (strain PB1/+) protein is Carboxy-S-adenosyl-L-methionine synthase 1.